The chain runs to 115 residues: Tyrosine-protein phosphatase 21 (115 aa).

Positions 1–115 (WLMIVEKECR…EIGGDAPMVV (115 aa)) constitute a Tyrosine-protein phosphatase domain. Aspartate 83 is a substrate binding site.

It belongs to the protein-tyrosine phosphatase family.

It catalyses the reaction O-phospho-L-tyrosyl-[protein] + H2O = L-tyrosyl-[protein] + phosphate. This is Tyrosine-protein phosphatase 21 (STY-21) from Styela plicata (Wrinkled sea squirt).